The following is a 231-amino-acid chain: Phosphoglycolate phosphatase, plasmid (231 aa).

D14 serves as the catalytic Nucleophile. 3 residues coordinate Mg(2+): D14, D16, and D175.

It belongs to the HAD-like hydrolase superfamily. CbbY/CbbZ/Gph/YieH family. As to quaternary structure, homotrimer. Mg(2+) is required as a cofactor.

It catalyses the reaction 2-phosphoglycolate + H2O = glycolate + phosphate. The protein operates within organic acid metabolism; glycolate biosynthesis; glycolate from 2-phosphoglycolate: step 1/1. In terms of biological role, specifically catalyzes the dephosphorylation of 2-phosphoglycolate. Is involved in the dissimilation of the intracellular 2-phosphoglycolate formed during the DNA repair of 3'-phosphoglycolate ends, a major class of DNA lesions induced by oxidative stress. The polypeptide is Phosphoglycolate phosphatase, plasmid (cbbZP) (Cupriavidus necator (strain ATCC 17699 / DSM 428 / KCTC 22496 / NCIMB 10442 / H16 / Stanier 337) (Ralstonia eutropha)).